A 441-amino-acid polypeptide reads, in one-letter code: Deoxyguanosinetriphosphate triphosphohydrolase-like protein (441 aa).

The disordered stretch occupies residues 1-27 (MTSSVWQERRHGEDKQRRNDHRSPYQR). Over residues 7–27 (QERRHGEDKQRRNDHRSPYQR) the composition is skewed to basic and acidic residues. Residues 59–252 (RLTHSLEVSQ…MELADDIAYA (194 aa)) form the HD domain.

Belongs to the dGTPase family. Type 2 subfamily.

This chain is Deoxyguanosinetriphosphate triphosphohydrolase-like protein, found in Shewanella oneidensis (strain ATCC 700550 / JCM 31522 / CIP 106686 / LMG 19005 / NCIMB 14063 / MR-1).